Consider the following 508-residue polypeptide: 2-isopropylmalate synthase (508 aa).

Residues 5–267 (IKIFDTTLRD…THRIDTTQIY (263 aa)) form the Pyruvate carboxyltransferase domain. Mn(2+) is bound by residues D14, H202, H204, and N238. A regulatory domain region spans residues 390 to 508 (VIDSFQINSG…SEIGESIISQ (119 aa)).

This sequence belongs to the alpha-IPM synthase/homocitrate synthase family. LeuA type 1 subfamily. In terms of assembly, homodimer. Requires Mn(2+) as cofactor.

Its subcellular location is the cytoplasm. It catalyses the reaction 3-methyl-2-oxobutanoate + acetyl-CoA + H2O = (2S)-2-isopropylmalate + CoA + H(+). It functions in the pathway amino-acid biosynthesis; L-leucine biosynthesis; L-leucine from 3-methyl-2-oxobutanoate: step 1/4. In terms of biological role, catalyzes the condensation of the acetyl group of acetyl-CoA with 3-methyl-2-oxobutanoate (2-ketoisovalerate) to form 3-carboxy-3-hydroxy-4-methylpentanoate (2-isopropylmalate). This is 2-isopropylmalate synthase from Ruminiclostridium cellulolyticum (strain ATCC 35319 / DSM 5812 / JCM 6584 / H10) (Clostridium cellulolyticum).